A 483-amino-acid polypeptide reads, in one-letter code: UDP-N-acetylmuramoylalanine--D-glutamate ligase (483 aa).

119-125 contributes to the ATP binding site; it reads GTNGKTT.

This sequence belongs to the MurCDEF family.

Its subcellular location is the cytoplasm. It catalyses the reaction UDP-N-acetyl-alpha-D-muramoyl-L-alanine + D-glutamate + ATP = UDP-N-acetyl-alpha-D-muramoyl-L-alanyl-D-glutamate + ADP + phosphate + H(+). Its pathway is cell wall biogenesis; peptidoglycan biosynthesis. Functionally, cell wall formation. Catalyzes the addition of glutamate to the nucleotide precursor UDP-N-acetylmuramoyl-L-alanine (UMA). The chain is UDP-N-acetylmuramoylalanine--D-glutamate ligase from Mycolicibacterium vanbaalenii (strain DSM 7251 / JCM 13017 / BCRC 16820 / KCTC 9966 / NRRL B-24157 / PYR-1) (Mycobacterium vanbaalenii).